The chain runs to 152 residues: Anti-CBASS protein Acb1 (152 aa).

A 3',3'-cGAMP-binding site is contributed by Tyr12. Position 12 (Tyr12) interacts with 3',3'-cUAMP. Catalysis depends on residues His44, Thr46, His113, and Thr115. Residues Glu141 and Trp147 each coordinate 3',3'-cGAMP. 2 residues coordinate 3',3'-cUAMP: Glu141 and Trp147.

This sequence belongs to the anti-CBASS protein Acb1 family.

The enzyme catalyses 3',3'-cUAMP + H2O = U[3'-5']pAp[3'] + H(+). It carries out the reaction 3',3',3'-c-tri-AMP + H2O = A[3'-5']pA[3'-5']pAp[3'] + H(+). The catalysed reaction is 3',3',3'-cAAG + H2O = G[3'-5']pA[3'-5']pAp[3'] + H(+). It catalyses the reaction 3',3',3'-cAAG + H2O = A[3'-5']pG[3'-5']pAp[3'] + H(+). The enzyme catalyses 3',3'-cGAMP + H2O = G[3'-5']pAp[3'] + H(+). In terms of biological role, counteracts the host CBASS antiviral system. Phosphodiesterase that enables metal-independent hydrolysis of the host cyclic di- and trinucleotide CBASS signals such as 3'3'-cGAMP, 3'3'cUA, and 3'3'3'-cAAA. Does not cleave cGG or cA4. Besides evasion of the CBASS system, might also enable evasion of the type III CRISPR systems that use cA3 signals. The sequence is that of Anti-CBASS protein Acb1 (57B) from Escherichia coli (Bacteriophage T4).